Consider the following 291-residue polypeptide: S-adenosylmethionine uptake transporter (291 aa).

Transmembrane regions (helical) follow at residues 4–24, 41–61, 74–91, 98–118, 121–141, 148–168, 178–198, 206–226, 237–257, and 260–280; these read ALKT…SSSA, VAFF…VYYG, ILRG…TYGL, TATV…VFFL, NIIW…VITL, FNPE…LDII, MISM…PAAA, LFEL…LFLL, ATAP…YFIF, and FPDK…LFII. EamA domains lie at 21–141 and 160–280; these read SSSA…VITL and ISFA…LFII.

It belongs to the drug/metabolite transporter (DMT) superfamily. 10 TMS drug/metabolite exporter (DME) (TC 2.A.7.3) family.

Its subcellular location is the cell inner membrane. Its function is as follows. Transports S-adenosylmethionine. This chain is S-adenosylmethionine uptake transporter (sam), found in Rickettsia bellii (strain RML369-C).